The primary structure comprises 418 residues: Vasopressin V1a receptor (418 aa).

A disordered region spans residues methionine 1–arginine 43. Topologically, residues methionine 1 to lysine 52 are extracellular. Asparagine 27 is a glycosylation site (N-linked (GlcNAc...) asparagine). A helical membrane pass occupies residues leucine 53 to leucine 76. The Cytoplasmic segment spans residues histidine 77–leucine 88. The chain crosses the membrane as a helical span at residues phenylalanine 89 to cysteine 110. Residues tryptophan 111–arginine 125 lie on the Extracellular side of the membrane. The cysteines at positions 124 and 203 are disulfide-linked. The chain crosses the membrane as a helical span at residues valine 126–alanine 147. The Cytoplasmic segment spans residues aspartate 148 to arginine 168. A helical transmembrane segment spans residues leucine 169 to serine 190. Topologically, residues methionine 191–threonine 218 are extracellular. Asparagine 196 is a glycosylation site (N-linked (GlcNAc...) asparagine). A helical membrane pass occupies residues tryptophan 219–isoleucine 239. Residues cysteine 240–threonine 293 lie on the Cytoplasmic side of the membrane. A helical transmembrane segment spans residues phenylalanine 294 to tryptophan 313. Residues serine 314–threonine 331 are Extracellular-facing. Residues isoleucine 332–phenylalanine 351 form a helical membrane-spanning segment. The Cytoplasmic segment spans residues serine 352–threonine 418. S-palmitoyl cysteine attachment occurs at residues cysteine 365 and cysteine 366. The tract at residues aspartate 377 to serine 410 is disordered. The segment covering arginine 383–glycine 399 has biased composition (polar residues). A Phosphoserine modification is found at serine 404.

The protein belongs to the G-protein coupled receptor 1 family. Vasopressin/oxytocin receptor subfamily.

It localises to the cell membrane. Its function is as follows. Receptor for arginine vasopressin. The activity of this receptor is mediated by G proteins which activate a phosphatidyl-inositol-calcium second messenger system. Has been involved in social behaviors, including affiliation and attachment. The polypeptide is Vasopressin V1a receptor (AVPR1A) (Homo sapiens (Human)).